The chain runs to 295 residues: Protoheme IX farnesyltransferase (295 aa).

Transmembrane regions (helical) follow at residues 30 to 50 (LVVL…HPLI), 51 to 71 (AVIS…INMW), 93 to 115 (ISRS…IMMI), 119 to 136 (YISG…IYVY), 148 to 168 (IVIG…SVTG), 175 to 195 (LVLF…LSLL), 219 to 239 (IHIL…GLFL), 244 to 264 (LYEI…FQVF), and 275 to 295 (MFTY…LSSF).

The protein belongs to the UbiA prenyltransferase family. Protoheme IX farnesyltransferase subfamily.

The protein localises to the cell inner membrane. The catalysed reaction is heme b + (2E,6E)-farnesyl diphosphate + H2O = Fe(II)-heme o + diphosphate. It participates in porphyrin-containing compound metabolism; heme O biosynthesis; heme O from protoheme: step 1/1. Converts heme B (protoheme IX) to heme O by substitution of the vinyl group on carbon 2 of heme B porphyrin ring with a hydroxyethyl farnesyl side group. The polypeptide is Protoheme IX farnesyltransferase (Ehrlichia ruminantium (strain Gardel)).